The sequence spans 261 residues: Cytochrome c oxidase subunit 3 (261 aa).

At 1–15 the chain is on the mitochondrial matrix side; the sequence is MTHQTHAYHMVNPSP. The helical transmembrane segment at 16–34 threads the bilayer; that stretch reads WPLTGALSALLMTSGLIMW. The Mitochondrial intermembrane portion of the chain corresponds to 35 to 40; it reads FHFNSV. The chain crosses the membrane as a helical span at residues 41–66; the sequence is ALLMLGLTTNMLTMYQWWRDVIREST. Residues 67–72 lie on the Mitochondrial matrix side of the membrane; that stretch reads FQGHHT. Residues 73–105 traverse the membrane as a helical segment; the sequence is PNVQKGLRYGMILFIISEVLFFTGFFWAFYHSS. Topologically, residues 106–128 are mitochondrial intermembrane; the sequence is LAPTPELGGCWPPTGIHPLNPLE. Residues 129–152 traverse the membrane as a helical segment; that stretch reads VPLLNTSVLLASGVSITWAHHSLM. Residues 153–155 lie on the Mitochondrial matrix side of the membrane; the sequence is EGN. A helical membrane pass occupies residues 156-183; sequence RNHMLQALFITIALGVYFTLLQASEYYE. Topologically, residues 184 to 190 are mitochondrial intermembrane; it reads APFTISD. A helical membrane pass occupies residues 191–223; that stretch reads GVYGSTFFVATGFHGLHVIIGSTFLIVCFFRQL. The Mitochondrial matrix segment spans residues 224–232; that stretch reads KFHFTSSHH. A helical transmembrane segment spans residues 233–256; the sequence is FGFEAAAWYWHFVDVVWLFLYVSI. The Mitochondrial intermembrane portion of the chain corresponds to 257–261; the sequence is YWWGS.

Belongs to the cytochrome c oxidase subunit 3 family. In terms of assembly, component of the cytochrome c oxidase (complex IV, CIV), a multisubunit enzyme composed of 14 subunits. The complex is composed of a catalytic core of 3 subunits MT-CO1, MT-CO2 and MT-CO3, encoded in the mitochondrial DNA, and 11 supernumerary subunits COX4I, COX5A, COX5B, COX6A, COX6B, COX6C, COX7A, COX7B, COX7C, COX8 and NDUFA4, which are encoded in the nuclear genome. The complex exists as a monomer or a dimer and forms supercomplexes (SCs) in the inner mitochondrial membrane with NADH-ubiquinone oxidoreductase (complex I, CI) and ubiquinol-cytochrome c oxidoreductase (cytochrome b-c1 complex, complex III, CIII), resulting in different assemblies (supercomplex SCI(1)III(2)IV(1) and megacomplex MCI(2)III(2)IV(2)).

The protein resides in the mitochondrion inner membrane. It catalyses the reaction 4 Fe(II)-[cytochrome c] + O2 + 8 H(+)(in) = 4 Fe(III)-[cytochrome c] + 2 H2O + 4 H(+)(out). In terms of biological role, component of the cytochrome c oxidase, the last enzyme in the mitochondrial electron transport chain which drives oxidative phosphorylation. The respiratory chain contains 3 multisubunit complexes succinate dehydrogenase (complex II, CII), ubiquinol-cytochrome c oxidoreductase (cytochrome b-c1 complex, complex III, CIII) and cytochrome c oxidase (complex IV, CIV), that cooperate to transfer electrons derived from NADH and succinate to molecular oxygen, creating an electrochemical gradient over the inner membrane that drives transmembrane transport and the ATP synthase. Cytochrome c oxidase is the component of the respiratory chain that catalyzes the reduction of oxygen to water. Electrons originating from reduced cytochrome c in the intermembrane space (IMS) are transferred via the dinuclear copper A center (CU(A)) of subunit 2 and heme A of subunit 1 to the active site in subunit 1, a binuclear center (BNC) formed by heme A3 and copper B (CU(B)). The BNC reduces molecular oxygen to 2 water molecules using 4 electrons from cytochrome c in the IMS and 4 protons from the mitochondrial matrix. In Nanger granti (Grant's gazelle), this protein is Cytochrome c oxidase subunit 3 (MT-CO3).